Consider the following 881-residue polypeptide: Phosphoinositide 3-kinase regulatory subunit 5 (881 aa).

The segment at 23–99 (SRDAVSSRWA…APHIPPDSEL (77 aa)) is heterodimerization. Disordered stretches follow at residues 312–339 (PVAS…ERDS) and 472–499 (PQAK…KLQT). Residues 316-330 (ENEEDEEEEEEDVET) show a composition bias toward acidic residues. The interaction with G beta gamma proteins stretch occupies residues 657 to 757 (PILADMILYY…WNDVEKVCTS (101 aa)).

In terms of assembly, heterodimer. Interacts with a catalytic subunit and with G beta gamma proteins.

The protein localises to the nucleus. It localises to the cytoplasm. Its subcellular location is the cell membrane. Its activity is regulated as follows. Greatly activated by G gamma proteins. In terms of biological role, regulatory subunit of the PI3K gamma complex. In Gallus gallus (Chicken), this protein is Phosphoinositide 3-kinase regulatory subunit 5 (PIK3R5).